A 172-amino-acid chain; its full sequence is C-phycocyanin beta chain (172 aa).

Residue Asn72 is modified to N4-methylasparagine. (2R,3E)-phycocyanobilin-binding residues include Cys82 and Cys153.

This sequence belongs to the phycobiliprotein family. Heterodimer of an alpha and a beta subunit, which further assembles into trimers and the trimers into hexamers. The basic functional unit of phycobiliproteins is a ring-shaped hexamer formed from two back-to-back trimers contacting via the alpha chain subunits. The trimers are composed of alpha/beta subunit heterodimers arranged around a three-fold axis of symmetry. The phycoerythrins also contain a gamma subunit which is located in the center of the hexamer. Post-translationally, contains two covalently linked phycocyanobilin chromophores.

The protein localises to the plastid. The protein resides in the cyanelle thylakoid membrane. In terms of biological role, light-harvesting photosynthetic bile pigment-protein from the phycobiliprotein complex (phycobilisome, PBS). Phycocyanin is the major phycobiliprotein in the PBS rod. The sequence is that of C-phycocyanin beta chain (cpcB) from Cyanophora paradoxa.